Consider the following 884-residue polypeptide: E3 SUMO-protein ligase SIZ1 (884 aa).

An SAP domain is found at 11-45 (LSYFRIKELKDVLTQLGLSKQGKKQELVDRILTLL). The segment at 84–103 (LASKGQVSSDTSNLKVKGEP) is disordered. The span at 88–97 (GQVSSDTSNL) shows a compositional bias: polar residues. Lysine 100 participates in a covalent cross-link: Glycyl lysine isopeptide (Lys-Gly) (interchain with G-Cter in SUMO). The PHD-type zinc finger occupies 112 to 168 (KVRCVCGNSLETDSMIQCEDPRCHVWQHVGCVILPDKPMDGNPPLPESFYCEICRLT). The SP-RING-type zinc-finger motif lies at 346–429 (SDSDIEVVAD…FNRITSKMKH (84 aa)). Zn(2+)-binding residues include cysteine 379, histidine 381, cysteine 402, and cysteine 405. Residue lysine 488 forms a Glycyl lysine isopeptide (Lys-Gly) (interchain with G-Cter in SUMO) linkage. Disordered regions lie at residues 753–778 (PSLQ…ADMS), 792–824 (GDSA…MDTT), and 836–869 (DSRQ…QTRH). 2 stretches are compositionally biased toward polar residues: residues 766-778 (SAQS…ADMS) and 803-824 (ATTN…MDTT). Positions 837-847 (SRQDKAKKQRS) are enriched in basic and acidic residues.

It belongs to the PIAS family. Interacts (via PHD domain) with SCE1, GTE3 and GTE5. Post-translationally, autosumoylated at Lys-100 and Lys-488. Ubiquitous.

Its subcellular location is the nucleus speckle. The protein operates within protein modification; protein sumoylation. Functionally, E3 SUMO protein ligase involved in regulation processes. Mediates SUMO/ attachment to PHR1, a MYB transcriptional activator controlling the phosphate deficiency responses. Functions as an upstream negative regulator of salicylic acid (SA) accumulation and subsequent SA-mediated systemic acquired resistance (SAR) signaling. Probably not involved in jasmonic acid (JA)-mediated defense response. Participates in abiotic stress-induced sumoylation. Controls heat shock-induced SUMO1 and SUMO2 conjugation and facilitates basal thermotolerance. Involved in freezing tolerance by mediating sumoylation of ICE1, a transcription activator of the cold signaling regulator CBF3/DREB1A. Acts as a positive regulator of drought stress tolerance. Acts as a floral repressor that promotes FLC expression by repressing FLD activity through sumoylation. Acts as a negative regulator of abscisic acid (ABA) signaling through ABI5 sumoylation. Mediates sumoylation of SCE1, GTE3 and GTE5. Functions as a negative regulator of SnRK1 signaling through sumoylation of several components of the SnRK1 complex. In Arabidopsis thaliana (Mouse-ear cress), this protein is E3 SUMO-protein ligase SIZ1.